A 505-amino-acid chain; its full sequence is Autophagy-related protein 18 (505 aa).

WD repeat units lie at residues 246 to 286 (AHKG…KLYQ) and 291 to 330 (TYPT…EERT). Residues 287 to 291 (FRRGT) carry the L/FRRG motif motif. The interval 328–380 (ERTSGGADDADSDDSGNENDGDNNSVGNGDVSSLLSDNDIESTREPYVDASRK) is disordered. The segment covering 335 to 348 (DDADSDDSGNENDG) has biased composition (acidic residues). Residues 349–360 (DNNSVGNGDVSS) are compositionally biased toward low complexity. A compositionally biased stretch (basic and acidic residues) spans 368–379 (ESTREPYVDASR).

It belongs to the WD repeat PROPPIN family. In terms of assembly, component of the PI(3,5)P2 regulatory complex.

The protein resides in the preautophagosomal structure membrane. It is found in the vacuole membrane. It localises to the endosome membrane. In terms of biological role, the PI(3,5)P2 regulatory complex regulates both the synthesis and turnover of phosphatidylinositol 3,5-bisphosphate (PtdIns(3,5)P2). Necessary for proper vacuole morphology. Plays an important role in osmotically-induced vacuole fragmentation. Required for cytoplasm to vacuole transport (Cvt) vesicle formation, pexophagy and starvation-induced autophagy. Involved in correct ATG9 trafficking to the pre-autophagosomal structure. Might also be involved in premeiotic DNA replication. This Candida glabrata (strain ATCC 2001 / BCRC 20586 / JCM 3761 / NBRC 0622 / NRRL Y-65 / CBS 138) (Yeast) protein is Autophagy-related protein 18 (ATG18).